The following is a 73-amino-acid chain: Toxin Td7 (73 aa).

An N-terminal signal peptide occupies residues 1 to 7 (IGMAVEC). One can recognise an LCN-type CS-alpha/beta domain in the interval 8–70 (KDGYLVGADG…VWDSATNRCG (63 aa)). 4 disulfides stabilise this stretch: Cys-18–Cys-69, Cys-22–Cys-44, Cys-30–Cys-50, and Cys-34–Cys-52. Lys-71 bears the Lysine amide mark.

Belongs to the long (4 C-C) scorpion toxin superfamily. Sodium channel inhibitor family. Beta subfamily. Expressed by the venom gland.

The protein resides in the secreted. In terms of biological role, beta toxins bind voltage-independently at site-4 of sodium channels (Nav) and shift the voltage of activation toward more negative potentials thereby affecting sodium channel activation and promoting spontaneous and repetitive firing. In Tityus discrepans (Venezuelan scorpion), this protein is Toxin Td7.